A 219-amino-acid polypeptide reads, in one-letter code: UPF0173 metal-dependent hydrolase Mhun_1705 (219 aa).

Belongs to the UPF0173 family.

The sequence is that of UPF0173 metal-dependent hydrolase Mhun_1705 from Methanospirillum hungatei JF-1 (strain ATCC 27890 / DSM 864 / NBRC 100397 / JF-1).